A 381-amino-acid chain; its full sequence is Phospholipid scramblase family protein C343.06c (381 aa).

The interval 336–369 is disordered; that stretch reads QEILKNDQETTPSTNDSSSETKSPFLSDADLDQQ. A compositionally biased stretch (polar residues) spans 344–359; sequence ETTPSTNDSSSETKSP.

This sequence belongs to the phospholipid scramblase family.

It localises to the mitochondrion. This chain is Phospholipid scramblase family protein C343.06c, found in Schizosaccharomyces pombe (strain 972 / ATCC 24843) (Fission yeast).